A 640-amino-acid polypeptide reads, in one-letter code: 1-deoxy-D-xylulose-5-phosphate synthase (640 aa).

Residues H72 and 113 to 115 (GHA) each bind thiamine diphosphate. D144 is a Mg(2+) binding site. Thiamine diphosphate contacts are provided by residues 145-146 (GA), N174, Y287, and E370. N174 serves as a coordination point for Mg(2+).

The protein belongs to the transketolase family. DXPS subfamily. Homodimer. It depends on Mg(2+) as a cofactor. Thiamine diphosphate serves as cofactor.

It catalyses the reaction D-glyceraldehyde 3-phosphate + pyruvate + H(+) = 1-deoxy-D-xylulose 5-phosphate + CO2. It functions in the pathway metabolic intermediate biosynthesis; 1-deoxy-D-xylulose 5-phosphate biosynthesis; 1-deoxy-D-xylulose 5-phosphate from D-glyceraldehyde 3-phosphate and pyruvate: step 1/1. In terms of biological role, catalyzes the acyloin condensation reaction between C atoms 2 and 3 of pyruvate and glyceraldehyde 3-phosphate to yield 1-deoxy-D-xylulose-5-phosphate (DXP). This Synechocystis sp. (strain ATCC 27184 / PCC 6803 / Kazusa) protein is 1-deoxy-D-xylulose-5-phosphate synthase.